Reading from the N-terminus, the 196-residue chain is Lipoprotein signal peptidase (196 aa).

The next 2 helical transmembrane spans lie at 75-95 (IVFLITNTIIVCYLYYLMMSS) and 97-117 (TIGGFAGYSFVIGGAIGNLID). Residues Asp126 and Asp144 contribute to the active site. A helical transmembrane segment spans residues 135-155 (YSFPVFNLADCFITLGVIILV).

It belongs to the peptidase A8 family.

It localises to the cell inner membrane. It carries out the reaction Release of signal peptides from bacterial membrane prolipoproteins. Hydrolyzes -Xaa-Yaa-Zaa-|-(S,diacylglyceryl)Cys-, in which Xaa is hydrophobic (preferably Leu), and Yaa (Ala or Ser) and Zaa (Gly or Ala) have small, neutral side chains.. It functions in the pathway protein modification; lipoprotein biosynthesis (signal peptide cleavage). Functionally, this protein specifically catalyzes the removal of signal peptides from prolipoproteins. This Rickettsia bellii (strain OSU 85-389) protein is Lipoprotein signal peptidase.